A 94-amino-acid chain; its full sequence is Integration host factor subunit beta (94 aa).

It belongs to the bacterial histone-like protein family. In terms of assembly, heterodimer of an alpha and a beta chain.

This protein is one of the two subunits of integration host factor, a specific DNA-binding protein that functions in genetic recombination as well as in transcriptional and translational control. This Roseobacter denitrificans (strain ATCC 33942 / OCh 114) (Erythrobacter sp. (strain OCh 114)) protein is Integration host factor subunit beta.